We begin with the raw amino-acid sequence, 165 residues long: Protein eva-1 homolog B (165 aa).

The chain crosses the membrane as a helical span at residues 29–49; the sequence is GLYFVLGVCFGLLLTLCLLVI. 2 disordered regions span residues 57-109 and 143-165; these read PRPR…GPLN and LLGT…MHYY. Residues 74-84 are compositionally biased toward acidic residues; it reads EPEDDDEDEED. 3 positions are modified to phosphothreonine: Thr85, Thr148, and Thr158.

The protein belongs to the EVA1 family.

It localises to the membrane. The chain is Protein eva-1 homolog B (EVA1B) from Homo sapiens (Human).